The chain runs to 340 residues: Glyceraldehyde-3-phosphate dehydrogenase 2 (340 aa).

NADP(+) is bound by residues 12–13, Arg-78, and Thr-120; that span reads RI. D-glyceraldehyde 3-phosphate is bound by residues 151-153 and Thr-182; that span reads SCT. Catalysis depends on Cys-152, which acts as the Nucleophile. Asn-183 provides a ligand contact to NADP(+). D-glyceraldehyde 3-phosphate contacts are provided by residues Arg-197, 210–211, and Arg-233; that span reads TG. Asn-315 contributes to the NADP(+) binding site.

The protein belongs to the glyceraldehyde-3-phosphate dehydrogenase family. Homotetramer. Interacts with BrxC. Post-translationally, in response to oxidative stress, the active site Cys likely reacts with bacillithiol (BSH) to form mixed disulfides to protect the Cys residue against overoxidation. S-bacillithiolation presumably leads to loss of catalytic activity. Debacillithiolation by monothiol bacilliredoxin BrxC restores the activity.

The protein resides in the cytoplasm. The enzyme catalyses D-glyceraldehyde 3-phosphate + phosphate + NADP(+) = (2R)-3-phospho-glyceroyl phosphate + NADPH + H(+). The catalysed reaction is D-glyceraldehyde 3-phosphate + phosphate + NAD(+) = (2R)-3-phospho-glyceroyl phosphate + NADH + H(+). Its pathway is carbohydrate biosynthesis; gluconeogenesis. Involved in the gluconeogenesis. Catalyzes the oxidative phosphorylation of glyceraldehyde 3-phosphate (G3P) to 1,3-bisphosphoglycerate (BPG) using the cofactor NADP. The first reaction step involves the formation of a hemiacetal intermediate between G3P and a cysteine residue, and this hemiacetal intermediate is then oxidized to a thioester, with concomitant reduction of NADP to NADPH. The reduced NADPH is then exchanged with the second NADP, and the thioester is attacked by a nucleophilic inorganic phosphate to produce BPG. This is Glyceraldehyde-3-phosphate dehydrogenase 2 from Bacillus subtilis (strain 168).